The primary structure comprises 318 residues: Serine protease 41 (318 aa).

The N-terminal stretch at 1-19 (MGARGALLLALLLARAGLG) is a signal peptide. Positions 20–54 (KPGELGALQAGPGAARRPGGGGREEACGHREIHAL) are excised as a propeptide. Residues 55–297 (VAGGVESARG…YFHWIRRVMS (243 aa)) enclose the Peptidase S1 domain. Cysteine 80 and cysteine 96 form a disulfide bridge. Residues histidine 95 and aspartate 147 each act as charge relay system in the active site. 3 disulfides stabilise this stretch: cysteine 181–cysteine 255, cysteine 215–cysteine 234, and cysteine 245–cysteine 273. An N-linked (GlcNAc...) asparagine glycan is attached at asparagine 211. The active-site Charge relay system is the serine 249. An N-linked (GlcNAc...) asparagine glycan is attached at asparagine 284. Serine 299 carries the GPI-anchor amidated serine lipid modification. Residues 300 to 318 (TPRPNPSQLLLLLALLWAP) constitute a propeptide, removed in mature form.

It belongs to the peptidase S1 family. Post-translationally, N-glycosylated.

Its subcellular location is the cell membrane. This is Serine protease 41 from Homo sapiens (Human).